We begin with the raw amino-acid sequence, 601 residues long: DNA replication licensing factor MCM3 (601 aa).

The 207-residue stretch at 180-386 folds into the MCM domain; the sequence is PINLLSKSIA…LDRRLSQHVL (207 aa). 229–236 contacts ATP; that stretch reads GDPSTAKS. The Arginine finger motif lies at 361–364; sequence SRFD.

It belongs to the MCM family. In terms of assembly, component of the MCM2-7 complex.

It localises to the nucleus. It is found in the chromosome. The protein localises to the nucleoplasm. It carries out the reaction ATP + H2O = ADP + phosphate + H(+). Functionally, acts as a component of the MCM2-7 complex (MCM complex) which is the replicative helicase essential for DNA replication initiation and elongation in eukaryotic cells. Required for DNA replication and cell proliferation. The active ATPase sites in the MCM2-7 ring are formed through the interaction surfaces of two neighboring subunits such that a critical structure of a conserved arginine finger motif is provided in trans relative to the ATP-binding site of the Walker A box of the adjacent subunit. This Entamoeba histolytica (strain ATCC 30459 / HM-1:IMSS / ABRM) protein is DNA replication licensing factor MCM3.